Reading from the N-terminus, the 129-residue chain is Nif-specific regulatory protein (129 aa).

Residues 1–46 (EFLLTKIGRQQGRPLTVTDSAIRLLMSHRWPGNVRDVENCLERSAI) enclose the Sigma-54 factor interaction domain. Residues 101–129 (QAKAARLLGMTPRQIAYRIQTLNIHMRKI) constitute a DNA-binding region (H-T-H motif).

In terms of assembly, interacts with sigma-54.

In terms of biological role, required for activation of most nif operons, which are directly involved in nitrogen fixation. This chain is Nif-specific regulatory protein (nifA), found in Azotobacter chroococcum mcd 1.